A 141-amino-acid polypeptide reads, in one-letter code: Large ribosomal subunit protein uL11 (141 aa).

The protein belongs to the universal ribosomal protein uL11 family. In terms of assembly, part of the ribosomal stalk of the 50S ribosomal subunit. Interacts with L10 and the large rRNA to form the base of the stalk. L10 forms an elongated spine to which L12 dimers bind in a sequential fashion forming a multimeric L10(L12)X complex. One or more lysine residues are methylated.

Functionally, forms part of the ribosomal stalk which helps the ribosome interact with GTP-bound translation factors. This Chlamydia abortus (strain DSM 27085 / S26/3) (Chlamydophila abortus) protein is Large ribosomal subunit protein uL11.